We begin with the raw amino-acid sequence, 134 residues long: uncharacterized protein (134 aa).

Positions 1–30 (MGTLQGAALRSRERPSWPQETHGHRERTEE) are disordered. Residues 10 to 30 (RSRERPSWPQETHGHRERTEE) are compositionally biased toward basic and acidic residues.

This is an uncharacterized protein from Homo sapiens (Human).